Consider the following 205-residue polypeptide: Shieldin complex subunit 1 (205 aa).

In terms of assembly, component of the shieldin complex, consisting of SHLD1, SHLD2, SHLD3 and MAD2L2/REV7. Within the complex, SHLD2 forms a scaffold which interacts with a SHLD3-MAD2L2 subcomplex via its N-terminus, and with SHLD1 via its C-terminus. Interacts with ASTE1.

It is found in the chromosome. Its function is as follows. Component of the shieldin complex, which plays an important role in repair of DNA double-stranded breaks (DSBs). During G1 and S phase of the cell cycle, the complex functions downstream of TP53BP1 to promote non-homologous end joining (NHEJ) and suppress DNA end resection. Mediates various NHEJ-dependent processes including immunoglobulin class-switch recombination, and fusion of unprotected telomeres. This chain is Shieldin complex subunit 1, found in Homo sapiens (Human).